Reading from the N-terminus, the 214-residue chain is Sugar transporter SWEET1 (214 aa).

The next 7 helical transmembrane spans lie at 3 to 23, 38 to 58, 65 to 85, 93 to 113, 125 to 145, 157 to 177, and 181 to 201; these read WMWL…SSGL, IQFL…YYGY, LIIV…AYIL, VVSQ…YFTL, LGLF…ADLA, SFPL…YGWV, and LYIT…FWLF. The region spanning 6–89 is the MtN3/slv 1 domain; the sequence is LLSGACIVFT…MAAYILYSLE (84 aa). Residues 124–207 form the MtN3/slv 2 domain; it reads QLGLFCSIFT…FWLFSRYPPD (84 aa).

This sequence belongs to the SWEET sugar transporter family.

The protein resides in the golgi apparatus membrane. It is found in the cell membrane. Its function is as follows. Mediates sugar transport across membranes. This Xenopus tropicalis (Western clawed frog) protein is Sugar transporter SWEET1 (slc50a1).